The primary structure comprises 281 residues: Ribulose-5-phosphate-3-epimerase, chloroplastic (281 aa).

The transit peptide at 1 to 45 (MSTSAASLCCSSTQVNGFGLRPERSLLYQPTSFSFSRRRTHGIVK) directs the protein to the chloroplast. Residue S63 participates in substrate binding. A divalent metal cation-binding residues include H88, D90, and H121. Catalysis depends on D90, which acts as the Proton acceptor. Residues H121, 199–202 (GFGG), 232–234 (DGG), and 254–256 (GSA) contribute to the substrate site. D232 contacts a divalent metal cation. Catalysis depends on D232, which acts as the Proton donor.

The protein belongs to the ribulose-phosphate 3-epimerase family. As to quaternary structure, homooctamer. Co(2+) is required as a cofactor. It depends on Fe(2+) as a cofactor. The cofactor is Mn(2+). Zn(2+) serves as cofactor. In terms of tissue distribution, present in roots, seeds and flowers. Accumulates in nematode feeding sites (NFS).

The protein resides in the plastid. It is found in the chloroplast thylakoid membrane. The catalysed reaction is D-ribulose 5-phosphate = D-xylulose 5-phosphate. It participates in carbohydrate biosynthesis; Calvin cycle. Its function is as follows. Essential protein required during embryogenesis. Catalyzes the reversible epimerization of D-ribulose 5-phosphate to D-xylulose 5-phosphate. Essential for the early steps of nematode feeding sites (NFS, multinucleated root cells) formation induced by the root-knot nematodes Heterodera schachtii, Meloidogyne incognita, M.javanica and M.hapla. This Arabidopsis thaliana (Mouse-ear cress) protein is Ribulose-5-phosphate-3-epimerase, chloroplastic.